The sequence spans 142 residues: uncharacterized protein (142 aa).

As to quaternary structure, homodimer.

This is an uncharacterized protein from Bacillus subtilis (strain 168).